A 601-amino-acid polypeptide reads, in one-letter code: Zinc finger CCCH domain-containing protein 33 (601 aa).

ANK repeat units lie at residues 71–101 (ERRTAAMVAALYGSTGVLGYVVAAAPAEAAR) and 106–138 (DGATPLHMAAAGGAANAVAATRLLLAAGASVDA). A compositionally biased stretch (low complexity) spans 167–180 (PAVSPSSSPKKSAS). A disordered region spans residues 167–203 (PAVSPSSSPKKSASPPSPPPPQEAKKEYPPDLTLPDL). 2 consecutive C3H1-type zinc fingers follow at residues 252 to 280 (SYSCVPCPEFRKGGSCRKGDACEYAHGVF) and 288 to 312 (QYRTRLCKDEVGCARRICFFAHKPD).

In Oryza sativa subsp. japonica (Rice), this protein is Zinc finger CCCH domain-containing protein 33.